The primary structure comprises 1091 residues: Sodium/potassium exporting P-type ATPase 5 (1091 aa).

Topologically, residues 1 to 63 (MSEGTVKENN…LGDDTKIDYK (63 aa)) are cytoplasmic. Residues 64 to 84 (AMVLHQVCNAMIMVLVISMAI) form a helical membrane-spanning segment. Over 85–90 (SFAVRD) the chain is Extracellular. The helical transmembrane segment at 91–111 (WITGGVISFVIAVNVLIGLVQ) threads the bilayer. Over 112–282 (EYKATKTMNS…TNVGTPLHRK (171 aa)) the chain is Cytoplasmic. Residues 283–303 (LSKLAVLLFWIAVLFAIIVMA) traverse the membrane as a helical segment. Over 304–312 (SQKFDVDKR) the chain is Extracellular. Residues 313–333 (VAIYAICVALSMIPSSLVVVL) form a helical membrane-spanning segment. The Cytoplasmic segment spans residues 334–815 (TITMSVGAAV…RRMTDNIQKF (482 aa)). Residue D369 is the 4-aspartylphosphate intermediate of the active site. Positions 369 and 371 each coordinate Mg(2+). ATP-binding residues include T371 and E483. The interval 499-525 (ALTGEKSTNQSNENDQSSLSQHNEKPG) is disordered. Positions 503–519 (EKSTNQSNENDQSSLSQ) are enriched in polar residues. The ATP site is built by K561, R606, T673, G674, D675, R732, and K738. D757 contributes to the Mg(2+) binding site. Position 760 (N760) interacts with ATP. A helical transmembrane segment spans residues 816-836 (VLQLLAENVAQALYLIIGLVF). Topologically, residues 837 to 848 (RDENGKSVFPLS) are extracellular. The helical transmembrane segment at 849–869 (PVEVLWIIVVTSCFPAMGLGL) threads the bilayer. Residues 870–885 (EKAAPDLMDRPPNDSE) are Cytoplasmic-facing. A helical transmembrane segment spans residues 886 to 906 (VGIFTWEVIIDTFAYGIIMTG). At 907-943 (SCMASFTGSLYGINSGRLGHDCDGTYNSSCRDVYRSR) the chain is on the extracellular side. Residues 944–964 (SAAFATMTWCALILAWEVVDM) form a helical membrane-spanning segment. Residues 965–991 (RRSFFRMHPDTDSPVKEFFRSIWGNQF) lie on the Cytoplasmic side of the membrane. Residues 992–1012 (LFWSIIFGFVSAFPVVYIPVI) traverse the membrane as a helical segment. At 1013–1021 (NDKVFLHKP) the chain is on the extracellular side. Residues 1022-1042 (IGAEWGLAIAFTIAFWIGAEL) form a helical membrane-spanning segment. The Cytoplasmic portion of the chain corresponds to 1043–1091 (YKCGKRRYFKTQRAHNSENDLERSSKHDPFEAYSTSTTLQSEINISVKH).

The protein belongs to the cation transport ATPase (P-type) (TC 3.A.3) family. Type IID subfamily. Requires Mg(2+) as cofactor. In terms of processing, the active site is phosphorylated in presence of sodium or potassium and in conditions of higher pH. Not phosphorylated in presence of calcium ions.

The protein resides in the cell membrane. The enzyme catalyses Na(+)(in) + ATP + H2O = Na(+)(out) + ADP + phosphate + H(+). The catalysed reaction is K(+)(in) + ATP + H2O = K(+)(out) + ADP + phosphate + H(+). Functionally, catalyzes the hydrolysis of ATP coupled with the export of sodium and potassium from the cell. May export potassium less efficiently. May transport other cations such as lithium. Sodium/potassium efflux ATPases are involved in salt tolerance and maintaining the membrane potential across the plasma membrane in high salinity (Na+) or alkaline (K+) environments. This Saccharomyces cerevisiae (strain ATCC 204508 / S288c) (Baker's yeast) protein is Sodium/potassium exporting P-type ATPase 5.